A 470-amino-acid polypeptide reads, in one-letter code: Neuraminidase (470 aa).

The Intravirion portion of the chain corresponds to 1–6 (MNPNQK). The chain crosses the membrane as a helical span at residues 7–27 (IITIGSISIAIGIISLILQIG). The interval 11–33 (GSISIAIGIISLILQIGNIISIW) is involved in apical transport and lipid raft association. At 28 to 470 (NIISIWASHS…GAELPFTIDK (443 aa)) the chain is on the virion surface side. The interval 36-90 (HSIQTGSQNHTGICNQRIITYENSTWVNQTYVNINNTNVVAGKDKTSMTLAGNSS) is hypervariable stalk region. Asn44, Asn58, Asn63, Asn70, and Asn88 each carry an N-linked (GlcNAc...) asparagine; by host glycan. Residues 91-470 (LCPIRGWAIY…GAELPFTIDK (380 aa)) are head of neuraminidase. Cystine bridges form between Cys92/Cys417, Cys124/Cys129, Cys184/Cys231, Cys233/Cys238, Cys279/Cys292, Cys281/Cys290, Cys318/Cys335, and Cys421/Cys447. Arg118 serves as a coordination point for substrate. N-linked (GlcNAc...) asparagine; by host glycosylation is present at Asn146. Asp151 serves as the catalytic Proton donor/acceptor. Arg152 is a binding site for substrate. A glycan (N-linked (GlcNAc...) asparagine; by host) is linked at Asn235. Residue 277 to 278 (EE) coordinates substrate. Arg293 is a binding site for substrate. Ca(2+) is bound by residues Asp294, Gly298, and Asp324. Position 368 (Arg368) interacts with substrate. Tyr402 acts as the Nucleophile in catalysis. 2 N-linked (GlcNAc...) asparagine; by host glycosylation sites follow: Asn434 and Asn455.

Belongs to the glycosyl hydrolase 34 family. In terms of assembly, homotetramer. Requires Ca(2+) as cofactor. Post-translationally, N-glycosylated.

It is found in the virion membrane. The protein localises to the host apical cell membrane. The catalysed reaction is Hydrolysis of alpha-(2-&gt;3)-, alpha-(2-&gt;6)-, alpha-(2-&gt;8)- glycosidic linkages of terminal sialic acid residues in oligosaccharides, glycoproteins, glycolipids, colominic acid and synthetic substrates.. With respect to regulation, inhibited by the neuraminidase inhibitors zanamivir (Relenza) and oseltamivir (Tamiflu). These drugs interfere with the release of progeny virus from infected cells and are effective against all influenza strains. Resistance to neuraminidase inhibitors is quite rare. In terms of biological role, catalyzes the removal of terminal sialic acid residues from viral and cellular glycoconjugates. Cleaves off the terminal sialic acids on the glycosylated HA during virus budding to facilitate virus release. Additionally helps virus spread through the circulation by further removing sialic acids from the cell surface. These cleavages prevent self-aggregation and ensure the efficient spread of the progeny virus from cell to cell. Otherwise, infection would be limited to one round of replication. Described as a receptor-destroying enzyme because it cleaves a terminal sialic acid from the cellular receptors. May facilitate viral invasion of the upper airways by cleaving the sialic acid moieties on the mucin of the airway epithelial cells. Likely to plays a role in the budding process through its association with lipid rafts during intracellular transport. May additionally display a raft-association independent effect on budding. Plays a role in the determination of host range restriction on replication and virulence. Sialidase activity in late endosome/lysosome traffic seems to enhance virus replication. The sequence is that of Neuraminidase from Influenza A virus (strain A/USA:Memphis/10/1996 H1N1).